The sequence spans 371 residues: Signal peptide peptidase-like 1 (371 aa).

Residues 1–6 lie on the Lumenal side of the membrane; it reads MESLWK. A helical transmembrane segment spans residues 7-27; the sequence is LSYLLEPASLALILTAVSVAY. Over 28–57 the chain is Cytoplasmic; that stretch reads ASASRALDHGREMERNLDFSEASITLDRSQ. A helical membrane pass occupies residues 58-75; it reads ALMIPLASSCSLLLMFYL. At 76 to 80 the chain is on the lumenal side; it reads FSSVS. Residues 81-103 form a helical membrane-spanning segment; the sequence is HLVTAFTAVASAMALFFCLSPYV. The Cytoplasmic segment spans residues 104 to 123; that stretch reads NCVRSRLGVGDPFVSRCCSK. A helical membrane pass occupies residues 124 to 146; the sequence is PFTRLQGLLVAICVGTVVAWLVS. Over 147-149 the chain is Lumenal; the sequence is GHW. Residues 150–167 form a helical membrane-spanning segment; the sequence is LLNNLLGISICIAFVSHV. The Cytoplasmic segment spans residues 168–171; sequence RLPN. The helical transmembrane segment at 172–192 threads the bilayer; sequence IKICALLLVCLFVYDVFWVFF. Residue Asp-186 is part of the active site. Over 193 to 258 the chain is Lumenal; that stretch reads SERFFGANVM…LAPGSSPGDY (66 aa). The chain crosses the membrane as a helical span at residues 259–279; it reads MMLGLGDMAIPGMLLALVLSF. Residue Asp-265 is part of the active site. Topologically, residues 280 to 301 are cytoplasmic; the sequence is DHRKIKDMSVSQDMPPSKQRKY. Residues 302–322 form a helical membrane-spanning segment; the sequence is VWYALTGYGVGLVTALAAGIL. The Lumenal portion of the chain corresponds to 323–326; the sequence is SQSP. Residues 327–347 traverse the membrane as a helical segment; sequence QPALLYLVPSTLGPVMYMSWL. The PAL motif lies at 328–330; it reads PAL. The Cytoplasmic portion of the chain corresponds to 348–371; it reads RNELWELWEGSRPIINDKAHLLEV.

The protein belongs to the peptidase A22B family.

It is found in the endosome membrane. Functionally, intramembrane-cleaving aspartic protease (I-CLiP) that cleaves type II membrane signal peptides in the hydrophobic plane of the membrane. The polypeptide is Signal peptide peptidase-like 1 (SPPL1) (Oryza sativa subsp. japonica (Rice)).